A 369-amino-acid chain; its full sequence is Protein VP6 (369 aa).

Disordered stretches follow at residues 17-169 (KREL…LQGR) and 184-208 (LDRIGGCSGNSKTEGEEAKAGGGDR). Positions 29-68 (LREKGSTEAKSKLKEDGEKKNKSEKEENKIHDDRRVESQK) are enriched in basic and acidic residues. Residues 92 to 111 (TGGGDGSAGARTGIGGGGVG) are compositionally biased toward gly residues. Basic and acidic residues-rich tracts occupy residues 137–148 (TGADRVANDDAT) and 196–208 (TEGEEAKAGGGDR).

It belongs to the orbivirus VP6 family.

The protein resides in the virion. The sequence is that of Protein VP6 (Segment-9) from African horse sickness virus (AHSV).